A 570-amino-acid chain; its full sequence is MSEKHPGPLVVEGKLSDAERMKLESNYLRGTIAEDLNDGLTGGFKGDNFLLIRFHGMYQQDDRDIRAERAAQKLEPRHAMLLRCRLPGGVITTTQWQAIDKFAADNTIYGSIRLTNRQTFQFHGILKKNVKPVHQMLHSVGLDALATANDMNRNVLCTSNPYESQLHAEAYEWAKKISEHLLPRTRAYAEIWLDQEKVATTDEEPILGQTYLPRKFKTTVVIPPQNDIDLHANDMNFVAIAENGKLVGFNLLVGGGLSIEHGNKKTYARTASEFGYLPLEHTLAVAEAVVTTQRDWGNRTDRKNAKTKYTLERVGLETFKAEVERRAGIKFEPIRPYEFTGRGDRIGWVKGIDNNWHLTLFIENGRILDYPGRPLKTGLLEIAKIHQGEFRITANQNLIIASVPESQKAKIETLARDHGLMNAVSAQRENSMACVSFPTCPLAMAEAERFLPSFTDKVEAILEKHGIPDEHIVMRVTGCPNGCGRAMLAEIGLVGKAPGRYNLHLGGNRIGTRIPRMYKENITEPDILASLGELIGRWAKEREAGEGFGDFTVRAGIIRPVLDPARDFWE.

[4Fe-4S] cluster-binding residues include Cys434, Cys440, Cys479, and Cys483. Residue Cys483 coordinates siroheme.

This sequence belongs to the nitrite and sulfite reductase 4Fe-4S domain family. Alpha(8)-beta(8). The alpha component is a flavoprotein, the beta component is a hemoprotein. Siroheme is required as a cofactor. Requires [4Fe-4S] cluster as cofactor.

It carries out the reaction hydrogen sulfide + 3 NADP(+) + 3 H2O = sulfite + 3 NADPH + 4 H(+). It participates in sulfur metabolism; hydrogen sulfide biosynthesis; hydrogen sulfide from sulfite (NADPH route): step 1/1. Component of the sulfite reductase complex that catalyzes the 6-electron reduction of sulfite to sulfide. This is one of several activities required for the biosynthesis of L-cysteine from sulfate. The chain is Sulfite reductase [NADPH] hemoprotein beta-component from Salmonella heidelberg (strain SL476).